A 629-amino-acid chain; its full sequence is Probable potassium transport system protein Kup 3 (629 aa).

Helical transmembrane passes span 20–40 (LSLSALGIVYGDIGTSPLYTF), 54–74 (VTTIMGSASLIIWTLIIIASV), 106–126 (PFIIAVGLMGAALIYGDGTIT), 143–163 (PSLKYYVLPIAITILITLFAI), 171–191 (IGKAFGPVMAFWFLTIGILGA), 212–232 (FLFSNGATGFFILCGVFLCVT), 253–273 (WFGLAFPSLIFNYLGQAALVL), 291–311 (FLLPLIILSTVATIIASQAII), 343–363 (IYIGVVNWLLMLATLGLIIGF), 372–392 (AYGIAVSATMLCTSVLLFIAL), 400–420 (IIKSGLVAGLFMIVDASFFAA), and 425–445 (FINGGYIPITLAIIIYSMMYI).

It belongs to the HAK/KUP transporter (TC 2.A.72) family.

It localises to the cell inner membrane. The enzyme catalyses K(+)(in) + H(+)(in) = K(+)(out) + H(+)(out). Its function is as follows. Transport of potassium into the cell. Likely operates as a K(+):H(+) symporter. The polypeptide is Probable potassium transport system protein Kup 3 (Legionella pneumophila (strain Corby)).